Reading from the N-terminus, the 273-residue chain is DnaJ homolog subfamily C member 27 (273 aa).

The segment at 1 to 18 (MEANMPKRKEPGRSLRIK) is required for interaction with MAPK1. GTP contacts are provided by residues 23 to 30 (GNAEVGKS), 71 to 75 (DMAGH), and 134 to 137 (NKID). The 57-residue stretch at 217–273 (DSWDMLGVKPGASRDEVNKAYRKLAVLLHPDKCVAPGSEDAFKAVVNARTALLKNIK) folds into the J domain.

This sequence belongs to the small GTPase superfamily. Rab family. In terms of assembly, interacts directly with MAPK1 (wild-type and kinase-deficient forms). Interacts directly (in GTP-bound form) with MAP2K1 (wild-type and kinase-deficient forms). Overexpressed in gastrointestinal cancers; expression correlates with later tumor-node-metastasis stages of colorectal cancers.

It localises to the nucleus. Its function is as follows. GTPase which can activate the MEK/ERK pathway and induce cell transformation when overexpressed. May act as a nuclear scaffold for MAPK1, probably by association with MAPK1 nuclear export signal leading to enhanced ERK1/ERK2 signaling. This chain is DnaJ homolog subfamily C member 27 (DNAJC27), found in Homo sapiens (Human).